Reading from the N-terminus, the 71-residue chain is Translation initiation factor IF-1 (71 aa).

Residues 1–71 (MSKDDLIQFT…LTKGRVIHRH (71 aa)) form the S1-like domain.

Belongs to the IF-1 family. As to quaternary structure, component of the 30S ribosomal translation pre-initiation complex which assembles on the 30S ribosome in the order IF-2 and IF-3, IF-1 and N-formylmethionyl-tRNA(fMet); mRNA recruitment can occur at any time during PIC assembly.

The protein resides in the cytoplasm. One of the essential components for the initiation of protein synthesis. Stabilizes the binding of IF-2 and IF-3 on the 30S subunit to which N-formylmethionyl-tRNA(fMet) subsequently binds. Helps modulate mRNA selection, yielding the 30S pre-initiation complex (PIC). Upon addition of the 50S ribosomal subunit IF-1, IF-2 and IF-3 are released leaving the mature 70S translation initiation complex. The protein is Translation initiation factor IF-1 of Rickettsia prowazekii (strain Madrid E).